The following is a 543-amino-acid chain: CTP synthase (543 aa).

Residues methionine 1–isoleucine 265 are amidoligase domain. Serine 13 is a binding site for CTP. Serine 13 is a binding site for UTP. Serine 14–leucine 19 serves as a coordination point for ATP. Residue tyrosine 54 coordinates L-glutamine. ATP is bound at residue aspartate 71. Mg(2+) contacts are provided by aspartate 71 and glutamate 139. CTP contacts are provided by residues aspartate 146–glutamate 148, lysine 186–glutamine 191, and lysine 222. Residues lysine 186–glutamine 191 and lysine 222 contribute to the UTP site. Arginine 238–alanine 240 provides a ligand contact to ATP. Positions threonine 291–leucine 542 constitute a Glutamine amidotransferase type-1 domain. L-glutamine is bound at residue glycine 353. Cysteine 380 acts as the Nucleophile; for glutamine hydrolysis in catalysis. Residues phenylalanine 381 to glutamine 384, glutamate 404, and arginine 470 contribute to the L-glutamine site. Catalysis depends on residues histidine 515 and glutamate 517.

It belongs to the CTP synthase family. As to quaternary structure, homotetramer.

The enzyme catalyses UTP + L-glutamine + ATP + H2O = CTP + L-glutamate + ADP + phosphate + 2 H(+). The catalysed reaction is L-glutamine + H2O = L-glutamate + NH4(+). It carries out the reaction UTP + NH4(+) + ATP = CTP + ADP + phosphate + 2 H(+). It participates in pyrimidine metabolism; CTP biosynthesis via de novo pathway; CTP from UDP: step 2/2. Its activity is regulated as follows. Allosterically activated by GTP, when glutamine is the substrate; GTP has no effect on the reaction when ammonia is the substrate. The allosteric effector GTP functions by stabilizing the protein conformation that binds the tetrahedral intermediate(s) formed during glutamine hydrolysis. Inhibited by the product CTP, via allosteric rather than competitive inhibition. Its function is as follows. Catalyzes the ATP-dependent amination of UTP to CTP with either L-glutamine or ammonia as the source of nitrogen. Regulates intracellular CTP levels through interactions with the four ribonucleotide triphosphates. The protein is CTP synthase of Rhodopseudomonas palustris (strain BisB5).